We begin with the raw amino-acid sequence, 648 residues long: Macrolide export ATP-binding/permease protein MacB 1 (648 aa).

In terms of domain architecture, ABC transporter spans 6-244 (LQLSGIRRHF…PAPTTSRADT (239 aa)). 42–49 (GASGSGKS) contacts ATP. A disordered region spans residues 222–248 (VVADRRREPTPPSPAPTTSRADTGGRG). 4 helical membrane-spanning segments follow: residues 273 to 293 (FLTM…VALG), 521 to 541 (LTLL…IGVM), 578 to 598 (LVCL…GVLF), and 613 to 633 (AVLM…FFPA).

It belongs to the ABC transporter superfamily. Macrolide exporter (TC 3.A.1.122) family. As to quaternary structure, homodimer. Part of the tripartite efflux system MacAB-TolC, which is composed of an inner membrane transporter, MacB, a periplasmic membrane fusion protein, MacA, and an outer membrane component, TolC. The complex forms a large protein conduit and can translocate molecules across both the inner and outer membranes. Interacts with MacA.

The protein resides in the cell inner membrane. Part of the tripartite efflux system MacAB-TolC. MacB is a non-canonical ABC transporter that contains transmembrane domains (TMD), which form a pore in the inner membrane, and an ATP-binding domain (NBD), which is responsible for energy generation. Confers resistance against macrolides. This chain is Macrolide export ATP-binding/permease protein MacB 1, found in Aeromonas hydrophila subsp. hydrophila (strain ATCC 7966 / DSM 30187 / BCRC 13018 / CCUG 14551 / JCM 1027 / KCTC 2358 / NCIMB 9240 / NCTC 8049).